The following is a 469-amino-acid chain: UDP-N-acetylmuramoylalanine--D-glutamate ligase (469 aa).

123–129 is an ATP binding site; it reads GTNGKST.

It belongs to the MurCDEF family.

The protein resides in the cytoplasm. The enzyme catalyses UDP-N-acetyl-alpha-D-muramoyl-L-alanine + D-glutamate + ATP = UDP-N-acetyl-alpha-D-muramoyl-L-alanyl-D-glutamate + ADP + phosphate + H(+). Its pathway is cell wall biogenesis; peptidoglycan biosynthesis. Its function is as follows. Cell wall formation. Catalyzes the addition of glutamate to the nucleotide precursor UDP-N-acetylmuramoyl-L-alanine (UMA). The sequence is that of UDP-N-acetylmuramoylalanine--D-glutamate ligase from Caulobacter sp. (strain K31).